The chain runs to 175 residues: Co-chaperone protein HscB homolog (175 aa).

The J domain maps to 7–79 (SHFDLFDLPA…LKRATYLLHL (73 aa)).

The protein belongs to the HscB family. In terms of assembly, interacts with HscA and stimulates its ATPase activity.

Co-chaperone involved in the maturation of iron-sulfur cluster-containing proteins. Seems to help targeting proteins to be folded toward HscA. The polypeptide is Co-chaperone protein HscB homolog (Paraburkholderia phytofirmans (strain DSM 17436 / LMG 22146 / PsJN) (Burkholderia phytofirmans)).